The sequence spans 428 residues: Elongation factor 1-alpha (428 aa).

Residues 5–215 form the tr-type G domain; it reads KPHINIVFIG…ALDQMPEPPK (211 aa). The tract at residues 14–21 is G1; sequence GHVDHGKS. 14 to 21 serves as a coordination point for GTP; sequence GHVDHGKS. Residue S21 participates in Mg(2+) binding. Residues 68–72 are G2; it reads GITID. The G3 stretch occupies residues 89 to 92; sequence DAPG. GTP-binding positions include 89–93 and 144–147; these read DAPGH and NKMD. A G4 region spans residues 144–147; the sequence is NKMD. The interval 181 to 183 is G5; the sequence is SAW.

The protein belongs to the TRAFAC class translation factor GTPase superfamily. Classic translation factor GTPase family. EF-Tu/EF-1A subfamily.

It localises to the cytoplasm. It carries out the reaction GTP + H2O = GDP + phosphate + H(+). GTP hydrolase that promotes the GTP-dependent binding of aminoacyl-tRNA to the A-site of ribosomes during protein biosynthesis. The chain is Elongation factor 1-alpha from Thermococcus celer.